Consider the following 397-residue polypeptide: L-rhamnonate dehydratase (397 aa).

2 residues coordinate substrate: histidine 25 and arginine 51. Aspartate 217, glutamate 243, and glutamate 271 together coordinate Mg(2+). Catalysis depends on histidine 321, which acts as the Proton acceptor. Substrate is bound at residue glutamate 341.

Belongs to the mandelate racemase/muconate lactonizing enzyme family. RhamD subfamily. As to quaternary structure, homooctamer; tetramer of dimers. Requires Mg(2+) as cofactor.

It catalyses the reaction L-rhamnonate = 2-dehydro-3-deoxy-L-rhamnonate + H2O. Its pathway is carbohydrate degradation; L-rhamnose degradation. In terms of biological role, catalyzes the dehydration of L-rhamnonate to 2-keto-3-deoxy-L-rhamnonate (KDR). Also shows activity with L-lyxonate and L-mannonate, with much lower catalytic efficiency. Catalyzes the third step in an alternative pathway for rhamnose utilization that does not involve phosphorylated intermediates. In Sphingomonas sp. (strain SKA58), this protein is L-rhamnonate dehydratase.